Here is a 404-residue protein sequence, read N- to C-terminus: Cytochrome P450 monooxygenase avaI (404 aa).

Cys-382 is a binding site for heme.

This sequence belongs to the cytochrome P450 family. Requires heme as cofactor.

It functions in the pathway secondary metabolite biosynthesis. Functionally, cytochrome P450 monooxygenase; part of the cluster that mediates the biosynthesis of a highly modified cyclo-arginine-tryptophan dipeptide (cRW). The first step of the pathway is perfornmed by the arginine-containing cyclodipeptide synthase (RCPDS) avaA that acts as the scaffold-generating enzyme and is responsible for formation of the cyclo-Arg-Trp (cRW) diketopiperazine. AvaB then acts as a multifunctional flavoenzyme that is responsible for generating the cyclo-Arg-formylkynurenine DKP, which can be deformylated by avaC. AvaB then further catalyzes an additional N-oxidation followed by cyclization and dehydration. The next step is an N-acetylation of the guanidine group catalyzed by the arginine N-acetyltransferase avaD. The roles of the additional enzymes identified within the ava cluster still have to be determined. This chain is Cytochrome P450 monooxygenase avaI, found in Aspergillus versicolor.